A 308-amino-acid chain; its full sequence is uncharacterized protein (308 aa).

The segment at 19–43 is disordered; sequence EPQASGAGPAQTPPPVTVPMTPPSK. A compositionally biased stretch (pro residues) spans 29-43; sequence QTPPPVTVPMTPPSK.

This is an uncharacterized protein from Deinococcus radiodurans (strain ATCC 13939 / DSM 20539 / JCM 16871 / CCUG 27074 / LMG 4051 / NBRC 15346 / NCIMB 9279 / VKM B-1422 / R1).